Reading from the N-terminus, the 203-residue chain is MKSRNGPLRVGIGGPVGSGKTALTEKLCKAMRDDYSVAVVTNDIYTTEDAEALVRMQALTSDRIVGVETGGCPHTAIREDATINLQAIAGLNRRIPDLDVVFIESGGDNLAATFSPDLADITIYVISVCQGEEIPRKGGPGITRSDLLVINKKDLAPYVGADLEVMDRDATRMRASRPFVFSDMKRGDGVSSIVSFLREQGGL.

14–21 (GPVGSGKT) contacts GTP.

The protein belongs to the SIMIBI class G3E GTPase family. UreG subfamily. Homodimer. UreD, UreF and UreG form a complex that acts as a GTP-hydrolysis-dependent molecular chaperone, activating the urease apoprotein by helping to assemble the nickel containing metallocenter of UreC. The UreE protein probably delivers the nickel.

It localises to the cytoplasm. Facilitates the functional incorporation of the urease nickel metallocenter. This process requires GTP hydrolysis, probably effectuated by UreG. This Rhizobium johnstonii (strain DSM 114642 / LMG 32736 / 3841) (Rhizobium leguminosarum bv. viciae) protein is Urease accessory protein UreG.